The sequence spans 555 residues: NAD-dependent protein deacetylase sirtuin-1 (555 aa).

Positions 39–46 match the Nuclear localization signal motif; that stretch reads PPKRKKRK. A Deacetylase sirtuin-type domain is found at 44 to 304; that stretch reads KRKDINTIED…NELCHRLGGE (261 aa). K46 carries the post-translational modification N6-acetyllysine. A required for interaction with the sumoylated form of CCAR2 region spans residues 64–67; the sequence is IIVL. Residues 69 to 88 and 153 to 156 contribute to the NAD(+) site; these read GAGVSVSCGIPDFRSRDGIY and QNID. H171 acts as the Proton acceptor in catalysis. 2 residues coordinate Zn(2+): C179 and C182. K185 carries the post-translational modification N6-acetyllysine. Positions 203 and 206 each coordinate Zn(2+). An S-nitrosocysteine mark is found at C203 and C206. K238 is subject to N6-acetyllysine. The Nuclear export signal signature appears at 241 to 247; it reads VDLLIVI. Residues 248-250, 273-275, and C290 each bind NAD(+); these read GSS and NRE. At K321 the chain carries N6-acetyllysine. The disordered stretch occupies residues 335-354; the sequence is LPPTPLHISEDSSSPERTVP. A Phosphothreonine modification is found at T338. Position 343 is a phosphoserine (S343). Residues 345-354 show a composition bias toward polar residues; it reads DSSSPERTVP. A Phosphothreonine modification is found at T352. The residue at position 417 (K417) is an N6-acetyllysine. Residues S466 and S468 each carry the phosphoserine modification. The tract at residues 469–529 is disordered; it reads EDDALSSSSC…GGSGADGGDQ (61 aa). Positions 473–493 are enriched in low complexity; the sequence is LSSSSCGSNSDSGTCQSPSLE. The segment covering 494–514 has biased composition (acidic residues); sequence EPLEDESEIEEFYNGLEDDAD. S552 carries the phosphoserine modification.

It belongs to the sirtuin family. Class I subfamily. In terms of assembly, interacts with XBP1 isoform 2. Found in a complex with PCAF and MYOD1. Interacts with FOXO1; the interaction deacetylates FOXO1, resulting in its nuclear retention and promotion of its transcriptional activity Component of the eNoSC complex, composed of SIRT1, SUV39H1 and RRP8. Interacts with HES1, HEY2 and PML. Interacts with RPS19BP1/AROS. Interacts with CCAR2 (via N-terminus); the interaction disrupts the interaction between SIRT1 and p53/TP53. Interacts with SETD7; the interaction induces the dissociation of SIRT1 from p53/TP53 and increases p53/TP53 activity. Interacts with MYCN, NR1I2, CREBZF, TSC2, TLE1, FOS, JUN, NR0B2, PPARG, NCOR, IRS1, IRS2 and NMNAT1. Interacts with HNF1A; the interaction occurs under nutrient restriction. Interacts with SUZ12; the interaction mediates the association with the PRC4 histone methylation complex which is specific as an association with PCR2 and PCR3 complex variants is not found. Interacts with HIV-1 tat. Interacts with BCL6; leads to a epigenetic repression of specific target genes. Interacts with CLOCK, BMAL1 and PER2. Interacts with PPARA; the interaction seems to be modulated by NAD(+) levels. Interacts with NR1H3 and this interaction is inhibited in the presence of CCAR2. Interacts with CHEK2. Interacts with p53/TP53. Exhibits a preferential interaction with sumoylated CCAR2 over its unmodified form. Interacts with PACS2. Interacts with SIRT7. Interacts with PUS7. Interacts with TULP3. Interacts with MORN3; the interaction enhances the ubiquitination of p53/TP53. The cofactor is Zn(2+). Methylated on multiple lysine residues; methylation is enhanced after DNA damage and is dispensable for deacetylase activity toward p53/TP53. In terms of processing, phosphorylated. Phosphorylated by STK4/MST1, resulting in inhibition of SIRT1-mediated p53/TP53 deacetylation. Phosphorylation by MAPK8/JNK1 at Thr-338 leads to increased nuclear localization and enzymatic activity. Phosphorylation at Thr-338 by DYRK1A and DYRK3 activates deacetylase activity and promotes cell survival. Phosphorylated by CaMK2, leading to increased p53/TP53 and NF-kappa-B p65/RELA deacetylation activity. Post-translationally, S-nitrosylated by GAPDH, leading to inhibit the NAD-dependent protein deacetylase activity. Acetylated at various Lys residues. Deacetylated via an autocatalytic mechanism. Autodeacetylation at Lys-46 promotes its protein deacetylase activity. In terms of processing, ubiquitinated; leading to degradation. Deubiquitinated by USP22; leading to stabilization.

It is found in the nucleus. It localises to the PML body. Its subcellular location is the cytoplasm. It catalyses the reaction N(6)-acetyl-L-lysyl-[protein] + NAD(+) + H2O = 2''-O-acetyl-ADP-D-ribose + nicotinamide + L-lysyl-[protein]. It carries out the reaction N(6)-propanoyl-L-lysyl-[protein] + NAD(+) + H2O = 3''-O-propanoyl-ADP-D-ribose + nicotinamide + L-lysyl-[protein]. The catalysed reaction is N(6)-(2E)-butenoyl-L-lysyl-[protein] + NAD(+) + H2O = 2''-O-(2E)-but-2-enoyl-ADP-D-ribose + nicotinamide + L-lysyl-[protein]. With respect to regulation, inhibited by nicotinamide. Activated by resveratrol (3,5,4'-trihydroxy-trans-stilbene), butein (3,4,2',4'-tetrahydroxychalcone), piceatannol (3,5,3',4'-tetrahydroxy-trans-stilbene), Isoliquiritigenin (4,2',4'-trihydroxychalcone), fisetin (3,7,3',4'-tetrahydroxyflavone) and quercetin (3,5,7,3',4'-pentahydroxyflavone). MAPK8/JNK1 and RPS19BP1/AROS act as positive regulators of deacetylation activity. Negatively regulated by CCAR2. Its function is as follows. NAD-dependent protein deacetylase that links transcriptional regulation directly to intracellular energetics and participates in the coordination of several separated cellular functions such as cell cycle, response to DNA damage, metabolism, apoptosis and autophagy. Can modulate chromatin function through deacetylation of histones and can promote alterations in the methylation of histones and DNA, leading to transcriptional repression. Deacetylates a broad range of transcription factors and coregulators, thereby regulating target gene expression positively and negatively. Serves as a sensor of the cytosolic ratio of NAD(+)/NADH which is altered by glucose deprivation and metabolic changes associated with caloric restriction. Is essential in skeletal muscle cell differentiation and in response to low nutrients mediates the inhibitory effect on skeletal myoblast differentiation which also involves 5'-AMP-activated protein kinase (AMPK) and nicotinamide phosphoribosyltransferase (NAMPT). Component of the eNoSC (energy-dependent nucleolar silencing) complex, a complex that mediates silencing of rDNA in response to intracellular energy status and acts by recruiting histone-modifying enzymes. The eNoSC complex is able to sense the energy status of cell: upon glucose starvation, elevation of NAD(+)/NADP(+) ratio activates SIRT1, leading to histone H3 deacetylation followed by dimethylation of H3 at 'Lys-9' (H3K9me2) by SUV39H1 and the formation of silent chromatin in the rDNA locus. Deacetylates 'Lys-266' of SUV39H1, leading to its activation. Inhibits skeletal muscle differentiation by deacetylating PCAF and MYOD1. Deacetylates H2A and 'Lys-26' of H1-4. Deacetylates 'Lys-16' of histone H4 (in vitro). Involved in NR0B2/SHP corepression function through chromatin remodeling: Recruited to LRH1 target gene promoters by NR0B2/SHP thereby stimulating histone H3 and H4 deacetylation leading to transcriptional repression. Proposed to contribute to genomic integrity via positive regulation of telomere length; however, reports on localization to pericentromeric heterochromatin are conflicting. Proposed to play a role in constitutive heterochromatin (CH) formation and/or maintenance through regulation of the available pool of nuclear SUV39H1. Upon oxidative/metabolic stress decreases SUV39H1 degradation by inhibiting SUV39H1 polyubiquitination by MDM2. This increase in SUV39H1 levels enhances SUV39H1 turnover in CH, which in turn seems to accelerate renewal of the heterochromatin which correlates with greater genomic integrity during stress response. Deacetylates 'Lys-382' of p53/TP53 and impairs its ability to induce transcription-dependent proapoptotic program and modulate cell senescence. Deacetylates TAF1B and thereby represses rDNA transcription by the RNA polymerase I. Deacetylates MYC, promotes the association of MYC with MAX and decreases MYC stability leading to compromised transformational capability. Deacetylates FOXO3 in response to oxidative stress thereby increasing its ability to induce cell cycle arrest and resistance to oxidative stress but inhibiting FOXO3-mediated induction of apoptosis transcriptional activity; also leading to FOXO3 ubiquitination and protesomal degradation. Appears to have a similar effect on MLLT7/FOXO4 in regulation of transcriptional activity and apoptosis. Deacetylates DNMT1; thereby impairs DNMT1 methyltransferase-independent transcription repressor activity, modulates DNMT1 cell cycle regulatory function and DNMT1-mediated gene silencing. Deacetylates RELA/NF-kappa-B p65 thereby inhibiting its transactivating potential and augments apoptosis in response to TNF-alpha. Deacetylates HIF1A, KAT5/TIP60, RB1 and HIC1. Deacetylates FOXO1 resulting in its nuclear retention and enhancement of its transcriptional activity leading to increased gluconeogenesis in liver. Inhibits E2F1 transcriptional activity and apoptotic function, possibly by deacetylation. Involved in HES1- and HEY2-mediated transcriptional repression. In cooperation with MYCN seems to be involved in transcriptional repression of DUSP6/MAPK3 leading to MYCN stabilization by phosphorylation at 'Ser-62'. Deacetylates MEF2D. Required for antagonist-mediated transcription suppression of AR-dependent genes which may be linked to local deacetylation of histone H3. Represses HNF1A-mediated transcription. Required for the repression of ESRRG by CREBZF. Deacetylates NR1H3 AND NR1H2 and deacetylation of NR1H3 at 'Lys-434' positively regulates transcription of NR1H3:RXR target genes, promotes NR1H3 proteasomal degradation and results in cholesterol efflux; a promoter clearing mechanism after reach round of transcription is proposed. Involved in lipid metabolism: deacetylates LPIN1, thereby inhibiting diacylglycerol synthesis. Implicated in regulation of adipogenesis and fat mobilization in white adipocytes by repression of PPARG which probably involves association with NCOR1 and SMRT/NCOR2. Deacetylates p300/EP300 and PRMT1. Deacetylates ACSS2 leading to its activation, and HMGCS1 deacetylation. Involved in liver and muscle metabolism. Through deacetylation and activation of PPARGC1A is required to activate fatty acid oxidation in skeletal muscle under low-glucose conditions and is involved in glucose homeostasis. Involved in regulation of PPARA and fatty acid beta-oxidation in liver. Involved in positive regulation of insulin secretion in pancreatic beta cells in response to glucose; the function seems to imply transcriptional repression of UCP2. Proposed to deacetylate IRS2 thereby facilitating its insulin-induced tyrosine phosphorylation. Deacetylates SREBF1 isoform SREBP-1C thereby decreasing its stability and transactivation in lipogenic gene expression. Involved in DNA damage response by repressing genes which are involved in DNA repair, such as XPC and TP73, deacetylating XRCC6/Ku70, and facilitating recruitment of additional factors to sites of damaged DNA, such as SIRT1-deacetylated NBN can recruit ATM to initiate DNA repair and SIRT1-deacetylated XPA interacts with RPA2. Also involved in DNA repair of DNA double-strand breaks by homologous recombination and specifically single-strand annealing independently of XRCC6/Ku70 and NBN. Promotes DNA double-strand breaks by mediating deacetylation of SIRT6. Transcriptional suppression of XPC probably involves an E2F4:RBL2 suppressor complex and protein kinase B (AKT) signaling. Transcriptional suppression of TP73 probably involves E2F4 and PCAF. Deacetylates WRN thereby regulating its helicase and exonuclease activities and regulates WRN nuclear translocation in response to DNA damage. Deacetylates APEX1 at 'Lys-6' and 'Lys-7' and stimulates cellular AP endonuclease activity by promoting the association of APEX1 to XRCC1. Catalyzes deacetylation of ERCC4/XPF, thereby impairing interaction with ERCC1 and nucleotide excision repair (NER). Increases p53/TP53-mediated transcription-independent apoptosis by blocking nuclear translocation of cytoplasmic p53/TP53 and probably redirecting it to mitochondria. Deacetylates XRCC6/Ku70 at 'Lys-539' and 'Lys-542' causing it to sequester BAX away from mitochondria thereby inhibiting stress-induced apoptosis. Is involved in autophagy, presumably by deacetylating ATG5, ATG7 and MAP1LC3B/ATG8. Deacetylates AKT1 which leads to enhanced binding of AKT1 and PDK1 to PIP3 and promotes their activation. Proposed to play role in regulation of STK11/LBK1-dependent AMPK signaling pathways implicated in cellular senescence which seems to involve the regulation of the acetylation status of STK11/LBK1. Can deacetylate STK11/LBK1 and thereby increase its activity, cytoplasmic localization and association with STRAD; however, the relevance of such activity in normal cells is unclear. In endothelial cells is shown to inhibit STK11/LBK1 activity and to promote its degradation. Deacetylates SMAD7 at 'Lys-64' and 'Lys-70' thereby promoting its degradation. Deacetylates CIITA and augments its MHC class II transactivation and contributes to its stability. Deacetylates MECOM/EVI1. Deacetylates PML at 'Lys-487' and this deacetylation promotes PML control of PER2 nuclear localization. During the neurogenic transition, represses selective NOTCH1-target genes through histone deacetylation in a BCL6-dependent manner and leading to neuronal differentiation. Regulates the circadian expression of several core clock genes, including BMAL1, RORC, PER2 and CRY1 and plays a critical role in maintaining a controlled rhythmicity in histone acetylation, thereby contributing to circadian chromatin remodeling. Deacetylates BMAL1 and histones at the circadian gene promoters in order to facilitate repression by inhibitory components of the circadian oscillator. Deacetylates PER2, facilitating its ubiquitination and degradation by the proteasome. Protects cardiomyocytes against palmitate-induced apoptosis. Deacetylates XBP1 isoform 2; deacetylation decreases protein stability of XBP1 isoform 2 and inhibits its transcriptional activity. Deacetylates PCK1 and directs its activity toward phosphoenolpyruvate production promoting gluconeogenesis. Involved in the CCAR2-mediated regulation of PCK1 and NR1D1. Deacetylates CTNB1 at 'Lys-49'. In POMC (pro-opiomelanocortin) neurons, required for leptin-induced activation of PI3K signaling. In addition to protein deacetylase activity, also acts as a protein-lysine deacylase by mediating protein depropionylation and decrotonylation. Mediates depropionylation of Osterix (SP7). Catalyzes decrotonylation of histones; it however does not represent a major histone decrotonylase. Deacetylates SOX9; promoting SOX9 nuclear localization and transactivation activity. Involved in the regulation of centrosome duplication. Deacetylates CENATAC in G1 phase, allowing for SASS6 accumulation on the centrosome and subsequent procentriole assembly. Deacetylates NDC80/HEC1. The chain is NAD-dependent protein deacetylase sirtuin-1 from Rattus norvegicus (Rat).